A 588-amino-acid polypeptide reads, in one-letter code: Outer membrane transporter CdiB (588 aa).

The helical transmembrane segment at 33 to 55 threads the bilayer; it reads VVRYFSLLPCLCILSFSSPAAML. The 76-residue stretch at 104-179 folds into the POTRA domain; that stretch reads FTVSRIVVSG…GVLHITVMEG (76 aa).

It belongs to the TPS (TC 1.B.20) family.

The protein localises to the cell outer membrane. Potential outer membrane protein component of a toxin-immunity protein module, which functions as a cellular contact-dependent growth inhibition (CDI) system. CDI modules allow bacteria to communicate with and inhibit the growth of closely related neighboring bacteria in a contact-dependent fashion. This protein may be required for secretion and assembly of the CdiA toxin protein. Its function is as follows. Probable member of a two partner secretion pathway (TPS) in which it mediates the secretion of CdiA. The sequence is that of Outer membrane transporter CdiB from Escherichia coli O6:K15:H31 (strain 536 / UPEC).